The chain runs to 911 residues: Valine--tRNA ligase (911 aa).

The 'HIGH' region signature appears at 57–67 (PTVSGSLHVGH). The short motif at 599–603 (KMSKS) is the 'KMSKS' region element. Lysine 602 is an ATP binding site. The disordered stretch occupies residues 882-911 (EESAAEDAPETEVAVEASELGEPPVKKPKH).

It belongs to the class-I aminoacyl-tRNA synthetase family. ValS type 2 subfamily. Monomer.

The protein resides in the cytoplasm. It carries out the reaction tRNA(Val) + L-valine + ATP = L-valyl-tRNA(Val) + AMP + diphosphate. Functionally, catalyzes the attachment of valine to tRNA(Val). As ValRS can inadvertently accommodate and process structurally similar amino acids such as threonine, to avoid such errors, it has a 'posttransfer' editing activity that hydrolyzes mischarged Thr-tRNA(Val) in a tRNA-dependent manner. This chain is Valine--tRNA ligase, found in Bifidobacterium longum subsp. infantis (strain ATCC 15697 / DSM 20088 / JCM 1222 / NCTC 11817 / S12).